We begin with the raw amino-acid sequence, 146 residues long: Hemoglobin subunit beta (146 aa).

Residues 2-146 (HWTAEEKQLI…VAHALARKYH (145 aa)) enclose the Globin domain. Residues His-63 and His-92 each coordinate heme b.

It belongs to the globin family. In terms of assembly, heterotetramer of two alpha chains and two beta chains. Red blood cells.

In terms of biological role, involved in oxygen transport from the lung to the various peripheral tissues. The chain is Hemoglobin subunit beta (HBB) from Aquila chrysaetos (Golden eagle).